Here is a 145-residue protein sequence, read N- to C-terminus: 3-dehydroquinate dehydratase (145 aa).

Residue Tyr-22 is the Proton acceptor of the active site. 3 residues coordinate substrate: Asn-73, His-79, and Asp-86. The Proton donor role is filled by His-99. Substrate contacts are provided by residues 100-101 (LS) and Arg-110.

The protein belongs to the type-II 3-dehydroquinase family. Homododecamer.

It carries out the reaction 3-dehydroquinate = 3-dehydroshikimate + H2O. The protein operates within metabolic intermediate biosynthesis; chorismate biosynthesis; chorismate from D-erythrose 4-phosphate and phosphoenolpyruvate: step 3/7. Its function is as follows. Catalyzes a trans-dehydration via an enolate intermediate. The chain is 3-dehydroquinate dehydratase from Prochlorococcus marinus (strain NATL1A).